The sequence spans 135 residues: Retinol-binding protein 1 (135 aa).

Residues 22-32 (RALDVNVALRK) are important for interaction with STRA6. All-trans-retinol is bound by residues Lys41, Met63, and Gln109.

The protein belongs to the calycin superfamily. Fatty-acid binding protein (FABP) family. As to quaternary structure, interacts (only as retinol-free apoprotein) with STRA6.

The protein resides in the cytoplasm. The protein localises to the lipid droplet. Its function is as follows. Cytoplasmic retinol-binding protein. Accepts retinol from the transport protein STRA6, and thereby contributes to retinol uptake, storage and retinoid homeostasis. This chain is Retinol-binding protein 1 (RBP1), found in Bos taurus (Bovine).